We begin with the raw amino-acid sequence, 421 residues long: Enolase (421 aa).

Gln165 contacts (2R)-2-phosphoglycerate. Glu207 functions as the Proton donor in the catalytic mechanism. Mg(2+)-binding residues include Asp244, Glu285, and Asp312. Residues Lys337, Arg366, Ser367, and Lys388 each coordinate (2R)-2-phosphoglycerate. The active-site Proton acceptor is the Lys337.

It belongs to the enolase family. Mg(2+) is required as a cofactor.

The protein localises to the cytoplasm. The protein resides in the secreted. It is found in the cell surface. It carries out the reaction (2R)-2-phosphoglycerate = phosphoenolpyruvate + H2O. It participates in carbohydrate degradation; glycolysis; pyruvate from D-glyceraldehyde 3-phosphate: step 4/5. In terms of biological role, catalyzes the reversible conversion of 2-phosphoglycerate (2-PG) into phosphoenolpyruvate (PEP). It is essential for the degradation of carbohydrates via glycolysis. This is Enolase from Ehrlichia ruminantium (strain Welgevonden).